Here is a 453-residue protein sequence, read N- to C-terminus: MKMKRKLLSLVSVLTILLGAFWVTKIVKADQVTNYTNTASITKSDGTALSNDPSKAVNYWEPLSFSNSITFPDEVSIKAGDTLTIKLPEQLQFTTALTFDVMHTNGQLAGKATTDPNTGEVTVTFTDIFEKLPNDKAMTLNFNAQLNHNNISIPGVVNFNYNNVAYSSYVKDKDITPISPDVNKVGYQDKSNPGLIHWKVLINNKQGAIDNLTLTDVVGEDQEIVKDSLVAARLQYIAGDDVDSLDEAASRPYAEDFSKNVTYQTNDLGLTTGFTYTIPGSSNNAIFISYTTRLTSSQSAGKDVSNTIAISGNNINYSNQTGYARIESAYGRASSRVKRQAETTTVTETTTSSSSETTTSEATTETSSTTNNNSTTTETATSTTGASTTQTKTTASQTNVPTTTNITTTSKQVTKQKAKFVLPSTGEQAGLLLTTVGLVIVAVAGVYFYRTRR.

Residues 1–29 (MKMKRKLLSLVSVLTILLGAFWVTKIVKA) form the signal peptide. The disordered stretch occupies residues 331–403 (GRASSRVKRQ…TASQTNVPTT (73 aa)). The segment covering 342-403 (ETTTVTETTT…TASQTNVPTT (62 aa)) has biased composition (low complexity). Residues 422 to 426 (LPSTG) carry the LPXTG sorting signal motif. Residue Thr425 is modified to Pentaglycyl murein peptidoglycan amidated threonine. The propeptide at 426–453 (GEQAGLLLTTVGLVIVAVAGVYFYRTRR) is removed by sortase.

The protein resides in the secreted. It localises to the cell wall. The polypeptide is Wall-associated protein (wapA) (Streptococcus mutans serotype c (strain ATCC 700610 / UA159)).